Here is a 130-residue protein sequence, read N- to C-terminus: Small ribosomal subunit protein uS9 (130 aa).

The segment covering 101 to 110 has biased composition (basic and acidic residues); that stretch reads AGFLTRDPRM. The interval 101–130 is disordered; sequence AGFLTRDPRMKERKKYGLKKARRAPQFSKR. Over residues 111–130 the composition is skewed to basic residues; sequence KERKKYGLKKARRAPQFSKR.

Belongs to the universal ribosomal protein uS9 family.

The polypeptide is Small ribosomal subunit protein uS9 (Clostridium tetani (strain Massachusetts / E88)).